The primary structure comprises 417 residues: Creatine kinase U-type, mitochondrial (417 aa).

The N-terminal 39 residues, 1-39, are a transit peptide targeting the mitochondrion; the sequence is MAGPFSRLLSARPGLRLLALAGAGSLAAGFLLRPEPVRA. The interval 40–64 is cardiolipin-binding; sequence ASERRRLYPPSAEYPDLRKHNNCMA. One can recognise a Phosphagen kinase N-terminal domain in the interval 45-131; sequence RLYPPSAEYP…FDPVIQERHN (87 aa). The residue at position 151 (Ser-151) is a Phosphoserine. Residues 158-400 form the Phosphagen kinase C-terminal domain; sequence YVLSSRVRTG…NYLIDCERRL (243 aa). 161-165 lines the ATP pocket; that stretch reads SSRVR. A Phosphoserine modification is found at Ser-196. Phosphothreonine is present on Thr-213. His-224 contributes to the ATP binding site. A Phosphoserine modification is found at Ser-232. Residues Arg-269, Arg-325, 353 to 358, and Asp-368 contribute to the ATP site; that span reads RGTGGV. Thr-355 is modified (phosphothreonine).

Belongs to the ATP:guanido phosphotransferase family. As to quaternary structure, exists as an octamer composed of four MTCK homodimers.

Its subcellular location is the mitochondrion inner membrane. The catalysed reaction is creatine + ATP = N-phosphocreatine + ADP + H(+). Reversibly catalyzes the transfer of phosphate between ATP and various phosphogens (e.g. creatine phosphate). Creatine kinase isoenzymes play a central role in energy transduction in tissues with large, fluctuating energy demands, such as skeletal muscle, heart, brain and spermatozoa. This chain is Creatine kinase U-type, mitochondrial (CKMT1A), found in Homo sapiens (Human).